The sequence spans 304 residues: Sulfate adenylyltransferase subunit 2 (304 aa).

This sequence belongs to the PAPS reductase family. CysD subfamily. As to quaternary structure, heterodimer composed of CysD, the smaller subunit, and CysNC.

It catalyses the reaction sulfate + ATP + H(+) = adenosine 5'-phosphosulfate + diphosphate. Its pathway is sulfur metabolism; hydrogen sulfide biosynthesis; sulfite from sulfate: step 1/3. With CysN forms the ATP sulfurylase (ATPS) that catalyzes the adenylation of sulfate producing adenosine 5'-phosphosulfate (APS) and diphosphate, the first enzymatic step in sulfur assimilation pathway. APS synthesis involves the formation of a high-energy phosphoric-sulfuric acid anhydride bond driven by GTP hydrolysis by CysN coupled to ATP hydrolysis by CysD. The polypeptide is Sulfate adenylyltransferase subunit 2 (Xylella fastidiosa (strain 9a5c)).